The following is a 429-amino-acid chain: Serine hydroxymethyltransferase (429 aa).

120-122 (GHI) contacts (6S)-5,6,7,8-tetrahydrofolate. The residue at position 226 (lysine 226) is an N6-(pyridoxal phosphate)lysine.

The protein belongs to the SHMT family. In terms of assembly, homodimer. The cofactor is pyridoxal 5'-phosphate.

Its subcellular location is the cytoplasm. The protein operates within amino-acid biosynthesis; glycine biosynthesis; glycine from L-serine: step 1/1. Its function is as follows. Catalyzes the reversible interconversion of serine and glycine with a modified folate serving as the one-carbon carrier. Also exhibits a pteridine-independent aldolase activity toward beta-hydroxyamino acids, producing glycine and aldehydes, via a retro-aldol mechanism. The chain is Serine hydroxymethyltransferase from Pyrobaculum arsenaticum (strain DSM 13514 / JCM 11321 / PZ6).